The following is a 295-amino-acid chain: MLDRIKIALQHLLPKRWLTELAGWGAERRGGWLTRGVITLFVRWYKVDMQEAQQPDVATYPTFNAFFVRPLRDEARPIDADPAVLVLPADGIISQLGPIEGEQVFQAKGHHYSLEALLAGNESMITRFRDGSFATTYLAPRDYHRVHMPCNGVLREMLYVPGELFSVNPLTAANIPNLFARNERIICLFDTDFGPMAQILVGATIVGSIETVWAGTVTPPREGIIKRWRYPQADADGAVVLLKGQEMGRFKLGSTVINLFAGKNVLLGEHLYTRYVTRVGQRLAHGIAQTDSPLT.

Residues aspartate 90, histidine 147, and serine 254 each act as charge relay system; for autoendoproteolytic cleavage activity in the active site. The Schiff-base intermediate with substrate; via pyruvic acid; for decarboxylase activity role is filled by serine 254. A Pyruvic acid (Ser); by autocatalysis modification is found at serine 254.

It belongs to the phosphatidylserine decarboxylase family. PSD-B subfamily. Prokaryotic type I sub-subfamily. As to quaternary structure, heterodimer of a large membrane-associated beta subunit and a small pyruvoyl-containing alpha subunit. The cofactor is pyruvate. In terms of processing, is synthesized initially as an inactive proenzyme. Formation of the active enzyme involves a self-maturation process in which the active site pyruvoyl group is generated from an internal serine residue via an autocatalytic post-translational modification. Two non-identical subunits are generated from the proenzyme in this reaction, and the pyruvate is formed at the N-terminus of the alpha chain, which is derived from the carboxyl end of the proenzyme. The autoendoproteolytic cleavage occurs by a canonical serine protease mechanism, in which the side chain hydroxyl group of the serine supplies its oxygen atom to form the C-terminus of the beta chain, while the remainder of the serine residue undergoes an oxidative deamination to produce ammonia and the pyruvoyl prosthetic group on the alpha chain. During this reaction, the Ser that is part of the protease active site of the proenzyme becomes the pyruvoyl prosthetic group, which constitutes an essential element of the active site of the mature decarboxylase.

Its subcellular location is the cell membrane. The catalysed reaction is a 1,2-diacyl-sn-glycero-3-phospho-L-serine + H(+) = a 1,2-diacyl-sn-glycero-3-phosphoethanolamine + CO2. It functions in the pathway phospholipid metabolism; phosphatidylethanolamine biosynthesis; phosphatidylethanolamine from CDP-diacylglycerol: step 2/2. Its function is as follows. Catalyzes the formation of phosphatidylethanolamine (PtdEtn) from phosphatidylserine (PtdSer). In Sodalis glossinidius (strain morsitans), this protein is Phosphatidylserine decarboxylase proenzyme.